We begin with the raw amino-acid sequence, 510 residues long: Gelatinase (510 aa).

Residues 1-30 form the signal peptide; that stretch reads MMKGNKILYILGTGIFVGSSCLFSSLFVAA. Residues 31-192 constitute a propeptide that is removed on maturation; it reads EEQVYSESEV…IMEKQDLTEH (162 aa). Asp324 contacts Ca(2+). Zn(2+) is bound at residue His328. The active site involves Glu329. The Zn(2+) site is built by His332 and Glu352. Ser376 contributes to the Ca(2+) binding site. His419 serves as the catalytic Proton donor.

It belongs to the peptidase M4 family.

Its subcellular location is the secreted. The enzyme catalyses Preferential cleavage: Xaa-|-Leu, Xaa-|-Phe, Xaa-|-Tyr, Xaa-|-Ala.. With respect to regulation, inhibited by L-leucine hydroxamate and phosphoramidon. Not inhibited by phenylmethanesulfonyl fluoride. Reversibly inactivated by straight-chain aliphatic alcohols. Its function is as follows. Metalloprotease capable of the hydrolysis of insoluble hydrophobic substrates. Hydrolyzes azocoll and gelatin and, at a lower rate, soluble and insoluble collagens. Does not cleave short synthetic peptides. Preferentially hydrolyzes the 24-Phe-|-Phe-25 bond in the insulin B-chain, followed by the 5-His-|-Leu-6 bond. Inactivates endothelin-1, primarily by cleavage of the 5-Ser-|-Leu-6 and 16-His-|-Leu-17 bonds. Hydrolyzes the alpha chain of C3 to generate a C3b-like protein. Inhibits complement-mediated hemolysis and opsinization of bacteria. Hydrolyzes the insect antimicrobial peptide cecropin. Decreases the length of E.faecalis chains via the activation of autolysin. Degrades polymerized fibrin. This is Gelatinase from Enterococcus faecalis (strain ATCC 700802 / V583).